The primary structure comprises 394 residues: Olfactomedin-like protein 3B (394 aa).

The signal sequence occupies residues 1 to 18; sequence MKATIFFLLLTVLAHSRS. Positions 29–94 form a coiled coil; sequence LENRMLAMEE…RVDRVEREMD (66 aa). Residues 132–383 enclose the Olfactomedin-like domain; the sequence is VCVNIISSLK…QILYKLELKK (252 aa). A disulfide bridge connects residues cysteine 133 and cysteine 310. N-linked (GlcNAc...) asparagine glycans are attached at residues asparagine 169, asparagine 204, and asparagine 233.

Belongs to the OLFML3 family.

It is found in the secreted. Its function is as follows. Secreted scaffold protein that plays an essential role in dorsoventral patterning during early development. Stabilizes axial formation by restricting chordin (CHRD) activity on the dorsal side. Acts by facilitating the association between the tolloid proteases and their substrate chordin (CHRD), leading to enhance chordin (CHRD) degradation. The chain is Olfactomedin-like protein 3B (olfml3b) from Danio rerio (Zebrafish).